Reading from the N-terminus, the 219-residue chain is GTP cyclohydrolase-2 (219 aa).

A GTP-binding site is contributed by R51 to E55. Zn(2+) is bound by residues C56, C67, and C69. GTP is bound by residues Q72, E94 to R96, and T116. Residue D128 is the Proton acceptor of the active site. R130 (nucleophile) is an active-site residue. Positions 151 and 156 each coordinate GTP.

Belongs to the GTP cyclohydrolase II family. Zn(2+) is required as a cofactor.

It carries out the reaction GTP + 4 H2O = 2,5-diamino-6-hydroxy-4-(5-phosphoribosylamino)-pyrimidine + formate + 2 phosphate + 3 H(+). The protein operates within cofactor biosynthesis; riboflavin biosynthesis; 5-amino-6-(D-ribitylamino)uracil from GTP: step 1/4. Its function is as follows. Catalyzes the conversion of GTP to 2,5-diamino-6-ribosylamino-4(3H)-pyrimidinone 5'-phosphate (DARP), formate and pyrophosphate. This chain is GTP cyclohydrolase-2, found in Pasteurella multocida (strain Pm70).